A 410-amino-acid chain; its full sequence is Dipeptidase ataJ (410 aa).

Zn(2+)-binding residues include His27, Asp29, and Glu138. A substrate-binding site is contributed by His165. A disordered region spans residues Thr180 to Arg200. Positions 258 and 318 each coordinate substrate.

This sequence belongs to the metallo-dependent hydrolases superfamily. Peptidase M19 family. It depends on Zn(2+) as a cofactor.

The enzyme catalyses an L-aminoacyl-L-amino acid + H2O = 2 an L-alpha-amino acid. It functions in the pathway mycotoxin biosynthesis. Functionally, dipeptidase; part of the gene cluster that mediates the biosynthesis of acetylaranotin, a member of the epipolythiodioxopiperazine (ETP) class of toxins characterized by a disulfide-bridged cyclic dipeptide. The first step of acetylaranotin biosynthesis is performed by the NRPS ataP which produces diketopiperazine cyclo-L-Phe-L-Phe via the condensation of 2 phenylalanines (L-Phe). The ataC domain of ataTC then catalyzes the formation of bishydroxylation of cyclo-L-Phe-L-Phe. The glutathione S-transferase domain ataG in ataIMG further catalyzes the conjugation of two glutathiones to the bishydroxylated intermediate. Next, the dipeptidase ataJ removes the Glu residues. The following step is performed by the carbon sulfur lyase domain ataI of ataIMG which may convert the bis-cysteinyl adduct to yield an epidithiol intermediate. The ataT domain from ataTC then catalyzes the oxidation of the free dithiols, followed by a cyclization step catalyzed by the cytochrome P450 ataF. AtaF probably acts as an epoxidase to promote a dual epoxidation formation at C8 and C9 along with C8' and C9', followed by the spontaneous nucleophilic attack of the amide nitrogens N10 and N10' to yield an intermediate with the pyrrolidine partial structure. The final steps of acetylaranotin biosynthesis involve the acetylation and ring rearrangement of an epitetrathiodiketopiperazine intermediate to produce acetylaranotin. AtaH probably catalyzes the acetylation of epitetrathiodiketopiperazine to produce a diacetate and ataY is responsible for the formation of the dihydrooxepin moiety that converts the diacetate intermediate to acetylaranotin via acetylapoaranotin. Both enzymes could function independently in the absence of the other. The acetylaranotin bis-thiomethyltransferase ataS located outside of acetylaranotin gene cluster is the main thiomethyltransferase responsible for converting acetylaranotin and its related intermediates to their methylated forms. This Aspergillus terreus (strain NIH 2624 / FGSC A1156) protein is Dipeptidase ataJ.